The primary structure comprises 79 residues: Defensin-like protein 3 (79 aa).

The N-terminal stretch at 1–29 is a signal peptide; the sequence is MAKFASIVALLFAALVVFAAFEAPTVVEA. Disulfide bonds link cysteine 32–cysteine 79, cysteine 43–cysteine 64, cysteine 49–cysteine 73, and cysteine 53–cysteine 75.

The protein belongs to the DEFL family.

Its subcellular location is the secreted. Functionally, possesses antifungal activity sensitive to inorganic cations. In Raphanus sativus (Radish), this protein is Defensin-like protein 3 (AFP3).